A 434-amino-acid polypeptide reads, in one-letter code: MKVKYALLSAGALQLLVVGCGSSHHETHYGYATLSYADYWAGELGQSRDVLLAGNAEADRAGDLDAGMFDAVSRATHGHGAFRQQFQYAVEVLGEKVLSKQETEDSRGRKKWEYETDPSVTKMVRASASFQDLGEDGEIKFEAVEGAVALADRASSFMVDSEEYKITNVKVHGMKFVPVAVPHELKGIAKEKFHFVEDSRVTENTNGLKTMLTEDSFSARKVSSMESPHDLVVDTVGTGYHSRFGSDAEASVMLKRADGSELSHREFIDYVMNFNTVRYDYYGDDASYTNLMASYGTKHSADSWWKTGRVPRISCGINYGFDRFKGSGPGYYRLTLIANGYRDVVADVRFLPKYEGNIDIGLKGKVLTIGGADAETLMDAAVDVFADGQPKLVSDQAVSLGQNVLSADFTPGTEYTVEVRFKEFGSVRAKVVAQ.

Positions 1 to 19 (MKVKYALLSAGALQLLVVG) are cleaved as a signal peptide. Cysteine 20 is lipidated: N-palmitoyl cysteine. A lipid anchor (S-diacylglycerol cysteine) is attached at cysteine 20.

Probably a monomer; a non-lipidated construct (residues 22-434) is monomeric in solution but crystallizes as a homodimer. Requires Zn(2+) as cofactor. In terms of processing, the N-terminus is blocked. Present as a doublet of low abundance 48 kDa and high abundance 47 kDa proteins. The longer form is probably due to readthrough of the stop codon; the extra amino acids at the C-terminus would be X-Lys-Arg-Gly-Val-Leu-Ser-Arg-Val-Ser, a peptide antibody against this sequence detects only the 48 kDa form.

Its subcellular location is the cell inner membrane. Functionally, a possible D,D-carboxypeptidase, that releases amino acids sequentially from a proteins C-terminus. Has zinc-dependent carboxypeptidase activity on synthetic depsipeptide substrates. May serve to decrease cross-linking of peptidoglycan, promoting the highly sinusous motility of this spirochaete. Overexpression of the whole protein in E.coli leads to aberrant cell morphology and extrusion of the cytoplasm, while overexpression of a construct with the first 62 resides of the protein fused to PhoA does have this effect, suggesting the whole protein, not the lipoprotein moiety, is toxic. Binds penicillin. Penicillin binding is covalent, does not require lipidation, and is zinc-dependent. While this protein has beta-lactamase activity in vitro, that is probably not its role in vivo, as T.pallidum is very sensitive to penicillin antibiotics. In terms of biological role, a pathogen-specific membrane antigen. Most abundant of the membrane lipoproteins, only found in pathogenic treponemes, suggesting that it is an important structural moiety in the cell envelope of virulent treponemal subspecies. A lipopeptide corresponding to the first 6 mature residues induces host (human and mouse) cytokine release by monocyte cell lines via TLR2 and CD14; nonlipidated protein does not stimulate host cells. Stimulates host (human) dendritic cell maturation to become MHC class II-positive antigen presenting cells via TLR2, which depends on lipidation; nonlipidated protein does not stimulate maturation. The protein is Putative DD-carboxypeptidase TP_0574 of Treponema pallidum (strain Nichols).